Here is a 238-residue protein sequence, read N- to C-terminus: MTTELHDDASGRLIVGLDVPTIAEAEKVVEELGNAVSFYKIGYQLVFAGGLDFAKSLVAARKKVFLDMKLLDIDNTIAKGVENVAKMGVSMLTLHAYPKAMRAAVEAARGSDLCLLGVTVLTSMDNADLREAGYFDNAETLVLKRARQAHEAGMGGIVASAVEAQAIRQAVRPDMAIVTPGIRPAGSEKGDQKRVMTPADALRAGASHLIVARPIVGAPDRKAAALAILKEMRSIGRS.

Substrate is bound by residues Asp18, Lys40, 67-76, Thr122, Arg183, Gln192, and Arg213; that span reads DMKLLDIDNT. Lys69 serves as the catalytic Proton donor.

This sequence belongs to the OMP decarboxylase family. Type 1 subfamily. In terms of assembly, homodimer.

The enzyme catalyses orotidine 5'-phosphate + H(+) = UMP + CO2. Its pathway is pyrimidine metabolism; UMP biosynthesis via de novo pathway; UMP from orotate: step 2/2. Functionally, catalyzes the decarboxylation of orotidine 5'-monophosphate (OMP) to uridine 5'-monophosphate (UMP). This is Orotidine 5'-phosphate decarboxylase from Brucella abortus (strain S19).